Here is a 207-residue protein sequence, read N- to C-terminus: Guanylate kinase (207 aa).

The 180-residue stretch at 5-184 (GNLFIVSAPS…ALADLRAIIR (180 aa)) folds into the Guanylate kinase-like domain. Position 12–19 (12–19 (APSGAGKS)) interacts with ATP.

The protein belongs to the guanylate kinase family.

Its subcellular location is the cytoplasm. It carries out the reaction GMP + ATP = GDP + ADP. Functionally, essential for recycling GMP and indirectly, cGMP. This chain is Guanylate kinase, found in Shewanella oneidensis (strain ATCC 700550 / JCM 31522 / CIP 106686 / LMG 19005 / NCIMB 14063 / MR-1).